The following is a 238-amino-acid chain: 2-C-methyl-D-erythritol 4-phosphate cytidylyltransferase (238 aa).

It belongs to the IspD/TarI cytidylyltransferase family. IspD subfamily.

It carries out the reaction 2-C-methyl-D-erythritol 4-phosphate + CTP + H(+) = 4-CDP-2-C-methyl-D-erythritol + diphosphate. It participates in isoprenoid biosynthesis; isopentenyl diphosphate biosynthesis via DXP pathway; isopentenyl diphosphate from 1-deoxy-D-xylulose 5-phosphate: step 2/6. Its function is as follows. Catalyzes the formation of 4-diphosphocytidyl-2-C-methyl-D-erythritol from CTP and 2-C-methyl-D-erythritol 4-phosphate (MEP). This chain is 2-C-methyl-D-erythritol 4-phosphate cytidylyltransferase, found in Leptospira interrogans serogroup Icterohaemorrhagiae serovar copenhageni (strain Fiocruz L1-130).